The sequence spans 609 residues: MSSTKQWDISKALTVATLFYFFHNVGKFCLMPFLTLYFRQLGLGAPLVGIIFGFKHAVHLLWAPLCSFLAKNHHKQRFFIMTSLLLSAGVGSLFAYYPPLDKNIVSLFCNTSMPWKEQLNPPIDISVSVDENLNTTYAAPTDHQTTTGALNTLPSSVGKLATDPAMTSLDLEITTHQRFTDQFPVTSNTILEHQTKNVLGSGKAQKVMSSKSAASNSKQRSSLNNHTSPYATHPNVSHHPSIHERKVRDIGIDFTDNSLDPQHKIFLIVLVLVIIWEILAAPLEWIADDSLYEYLDFVDATDRHGKLWIWGYLGASMGSIFITFLVDNLNCFVIYDIPRVFFHFFCYGGFLIGTLFLSTLYPIHVSKKTEHSNKTVKALGFLGSDGRIVLTALTVFLLGAVGSTTQNFLFWQMQDVGSSELYMGLSIAVGLLSELTLYFFRNKLLKIFTFKWMVALGLFSLGVQCLYYSFLWAPWSVLAIQILNAFSSGVIWWAINSQVVDLASPGTERSLQLALRWLAYGCGSSTGSFASGFIISRFSLAVLYQACCITLLLWIIIFLLVQPKLPNTKKINYSRLLAADNSDMSDSDEEQDRDWLVTAMKDENSNRNW.

2 helical membrane-spanning segments follow: residues 41 to 61 (LGLG…VHLL) and 78 to 98 (FFIM…AYYP). The segment at 201-241 (SGKAQKVMSSKSAASNSKQRSSLNNHTSPYATHPNVSHHPS) is disordered. The span at 207–230 (VMSSKSAASNSKQRSSLNNHTSPY) shows a compositional bias: polar residues. A run of 9 helical transmembrane segments spans residues 265-285 (IFLI…PLEW), 307-327 (LWIW…FLVD), 340-360 (VFFH…LSTL), 388-408 (IVLT…TQNF), 420-440 (ELYM…LYFF), 452-472 (WMVA…SFLW), 475-495 (WSVL…WWAI), 513-535 (LALR…GFII), and 541-561 (AVLY…FLLV).

The protein belongs to the major facilitator superfamily. MFSD6 family.

It localises to the membrane. This Xenopus laevis (African clawed frog) protein is Major facilitator superfamily domain-containing protein 6-like protein A (mfsd6l-a).